The sequence spans 375 residues: Putative type I specificity subunit S.MpnORF638P (375 aa).

The protein belongs to the type-I restriction system S methylase family. The methyltransferase is composed of M and S polypeptides.

In terms of biological role, the specificity (S) subunit of a type I methyltransferase (MTase); this subunit dictates DNA sequence specificity. The single R subunit has multiple frameshifts and is probably not expressed. In Mycoplasma pneumoniae (strain ATCC 29342 / M129 / Subtype 1) (Mycoplasmoides pneumoniae), this protein is Putative type I specificity subunit S.MpnORF638P.